Here is a 271-residue protein sequence, read N- to C-terminus: Hydroxyethylthiazole kinase (271 aa).

Residue Met46 coordinates substrate. 2 residues coordinate ATP: Arg122 and Thr169. Gly196 is a binding site for substrate.

The protein belongs to the Thz kinase family. It depends on Mg(2+) as a cofactor.

It carries out the reaction 5-(2-hydroxyethyl)-4-methylthiazole + ATP = 4-methyl-5-(2-phosphooxyethyl)-thiazole + ADP + H(+). Its pathway is cofactor biosynthesis; thiamine diphosphate biosynthesis; 4-methyl-5-(2-phosphoethyl)-thiazole from 5-(2-hydroxyethyl)-4-methylthiazole: step 1/1. In terms of biological role, catalyzes the phosphorylation of the hydroxyl group of 4-methyl-5-beta-hydroxyethylthiazole (THZ). This is Hydroxyethylthiazole kinase from Alkaliphilus oremlandii (strain OhILAs) (Clostridium oremlandii (strain OhILAs)).